Consider the following 144-residue polypeptide: 3-hydroxyacyl-[acyl-carrier-protein] dehydratase FabZ (144 aa).

H51 is a catalytic residue.

It belongs to the thioester dehydratase family. FabZ subfamily.

The protein localises to the cytoplasm. It catalyses the reaction a (3R)-hydroxyacyl-[ACP] = a (2E)-enoyl-[ACP] + H2O. Involved in unsaturated fatty acids biosynthesis. Catalyzes the dehydration of short chain beta-hydroxyacyl-ACPs and long chain saturated and unsaturated beta-hydroxyacyl-ACPs. The polypeptide is 3-hydroxyacyl-[acyl-carrier-protein] dehydratase FabZ (Clostridium botulinum (strain Loch Maree / Type A3)).